The primary structure comprises 252 residues: NADH-quinone oxidoreductase subunit E (252 aa).

The [2Fe-2S] cluster site is built by C114, C119, C155, and C159. Residues 211 to 252 (LAGLPDQRPDEGQGGPGAPTLAGLQVARKNDMQAPPTPGADE) form a disordered region.

The protein belongs to the complex I 24 kDa subunit family. [2Fe-2S] cluster serves as cofactor.

The enzyme catalyses a quinone + NADH + 5 H(+)(in) = a quinol + NAD(+) + 4 H(+)(out). Its function is as follows. NDH-1 shuttles electrons from NADH, via FMN and iron-sulfur (Fe-S) centers, to quinones in the respiratory chain. The immediate electron acceptor for the enzyme in this species is believed to be menaquinone. Couples the redox reaction to proton translocation (for every two electrons transferred, four hydrogen ions are translocated across the cytoplasmic membrane), and thus conserves the redox energy in a proton gradient. The polypeptide is NADH-quinone oxidoreductase subunit E (nuoE) (Mycobacterium bovis (strain ATCC BAA-935 / AF2122/97)).